Consider the following 301-residue polypeptide: Phosducin-like protein (301 aa).

Position 2 is an N-acetylthreonine (Thr2). A disordered region spans residues 15–60 (YYYSTSEDEDSDHEDKDRGRGAPASSSTPAEAELAGEGISVNTGPK). A phosphoserine mark is found at Ser20 and Ser25. The segment covering 36-49 (APASSSTPAEAELA) has biased composition (low complexity). The region spanning 36 to 299 (APASSSTPAE…TCHSEDSDLE (264 aa)) is the Phosducin domain. A thioredoxin fold region spans residues 158–301 (FKQVLEIPSG…HSEDSDLEID (144 aa)). Residues Ser226, Ser293, and Ser296 each carry the phosphoserine modification.

The protein belongs to the phosducin family. In terms of assembly, interacts with the CCT chaperonin complex. Forms a complex with the beta and gamma subunits of the GTP-binding protein, transducin.

The protein resides in the cell projection. It is found in the cilium. In terms of biological role, functions as a co-chaperone for CCT in the assembly of heterotrimeric G protein complexes, facilitates the assembly of both Gbeta-Ggamma and RGS-Gbeta5 heterodimers. Also acts as a positive regulator of hedgehog signaling and regulates ciliary function. The protein is Phosducin-like protein (Pdcl) of Rattus norvegicus (Rat).